The following is a 505-amino-acid chain: ATP synthase subunit alpha (505 aa).

170–177 (GDRQTGKT) lines the ATP pocket.

This sequence belongs to the ATPase alpha/beta chains family. In terms of assembly, F-type ATPases have 2 components, CF(1) - the catalytic core - and CF(0) - the membrane proton channel. CF(1) has five subunits: alpha(3), beta(3), gamma(1), delta(1), epsilon(1). CF(0) has four main subunits: a(1), b(1), b'(1) and c(9-12).

The protein resides in the cellular thylakoid membrane. The enzyme catalyses ATP + H2O + 4 H(+)(in) = ADP + phosphate + 5 H(+)(out). In terms of biological role, produces ATP from ADP in the presence of a proton gradient across the membrane. The alpha chain is a regulatory subunit. The chain is ATP synthase subunit alpha from Prochlorococcus marinus subsp. pastoris (strain CCMP1986 / NIES-2087 / MED4).